The following is a 100-amino-acid chain: Small ribosomal subunit protein uS14c (100 aa).

This sequence belongs to the universal ribosomal protein uS14 family. In terms of assembly, part of the 30S ribosomal subunit.

It localises to the plastid. Binds 16S rRNA, required for the assembly of 30S particles. The polypeptide is Small ribosomal subunit protein uS14c (rps14) (Cuscuta reflexa (Southern Asian dodder)).